We begin with the raw amino-acid sequence, 329 residues long: MTKYKLEYIWLDATRPYQTLRGKTQIKEFDAFPTLEQLPLWGFDGSSTLQAEGRTSDCVLKPVTVYPDPVRTNGALVMCEVMMPDAETPHASNTRATVLDDEGAWFGFEQEYFFYKNGRPLGFPEQGYPAPQGPYYTGVGYKNVGDVARQIVEEHLDICLAAGINHEGINAEVAKGQWEFQIFGKGSKKAADEVCVARYLLVRLTEKYGIDVEFHCKPLGDTDWNGSGMHANFSTAYLREVGGQDYFEALMAAFEKNLHDHINVYGPDNHLRLTGKHETAPWDKFSYGVADRGASIRVPHSFVNNAYPGYLEDRRANSQGDPYQMLLSS.

The GS beta-grasp domain occupies 4–86; the sequence is YKLEYIWLDA…VMCEVMMPDA (83 aa). The GS catalytic domain occupies 89-329; the sequence is PHASNTRATV…GDPYQMLLSS (241 aa). 2 residues coordinate Mg(2+): glutamate 109 and glutamate 111. ATP is bound at residue glutamate 167. Mg(2+) contacts are provided by glutamate 172 and glutamate 179. Residue glutamate 278 coordinates L-glutamate.

The protein belongs to the glutamine synthetase family. Homooctamer and homotetramer. Mg(2+) is required as a cofactor.

It is found in the cytoplasm. It catalyses the reaction L-glutamate + NH4(+) + ATP = L-glutamine + ADP + phosphate + H(+). Its function is as follows. Catalyzes the ATP-dependent biosynthesis of glutamine from glutamate and ammonia. In Rhizobium meliloti (Ensifer meliloti), this protein is Glutamine synthetase.